The following is a 305-amino-acid chain: Syntaxin-123 (305 aa).

Residue M1 is modified to N-acetylmethionine. At 1-278 (MNDLISSSFK…KVLQRNNRKW (278 aa)) the chain is on the cytoplasmic side. Residues 46–66 (VKEDMKAVDEIHKRLQDANEE) are a coiled coil. The 63-residue stretch at 206 to 268 (LSEIQERHDT…MRGTDQLHGA (63 aa)) folds into the t-SNARE coiled-coil homology domain. The chain crosses the membrane as a helical; Anchor for type IV membrane protein span at residues 279–299 (ACIATILAIVVVIVILFPILF). Topologically, residues 300–305 (NTLLRP) are vesicular.

The protein belongs to the syntaxin family. Part of the t-SNARE complex. In terms of tissue distribution, expressed in tips of root hairs.

It is found in the membrane. Vesicle trafficking protein that functions in the secretory pathway. Acts in coordination with SYP132 to mediate tip-focused membrane trafficking for root hair tip growth. Functions in root hair elongation by forming SNARE complexes with VAMP721,VAMP722 or VAMP724. This is Syntaxin-123 from Arabidopsis thaliana (Mouse-ear cress).